A 264-amino-acid polypeptide reads, in one-letter code: Thymidylate synthase (264 aa).

Arg-21 lines the dUMP pocket. (6R)-5,10-methylene-5,6,7,8-tetrahydrofolate is bound at residue His-51. 126-127 (RR) lines the dUMP pocket. Catalysis depends on Cys-146, which acts as the Nucleophile. Residues 166–169 (RSAD), Asn-177, and 207–209 (HLY) each bind dUMP. Asp-169 is a (6R)-5,10-methylene-5,6,7,8-tetrahydrofolate binding site. Ala-263 is a (6R)-5,10-methylene-5,6,7,8-tetrahydrofolate binding site.

Belongs to the thymidylate synthase family. Bacterial-type ThyA subfamily. In terms of assembly, homodimer.

The protein resides in the cytoplasm. The catalysed reaction is dUMP + (6R)-5,10-methylene-5,6,7,8-tetrahydrofolate = 7,8-dihydrofolate + dTMP. It functions in the pathway pyrimidine metabolism; dTTP biosynthesis. Catalyzes the reductive methylation of 2'-deoxyuridine-5'-monophosphate (dUMP) to 2'-deoxythymidine-5'-monophosphate (dTMP) while utilizing 5,10-methylenetetrahydrofolate (mTHF) as the methyl donor and reductant in the reaction, yielding dihydrofolate (DHF) as a by-product. This enzymatic reaction provides an intracellular de novo source of dTMP, an essential precursor for DNA biosynthesis. This is Thymidylate synthase from Legionella pneumophila (strain Paris).